A 253-amino-acid polypeptide reads, in one-letter code: Precorrin-4 C(11)-methyltransferase (253 aa).

It belongs to the precorrin methyltransferase family.

The catalysed reaction is precorrin-4 + S-adenosyl-L-methionine = precorrin-5 + S-adenosyl-L-homocysteine. The protein operates within cofactor biosynthesis; adenosylcobalamin biosynthesis; cob(II)yrinate a,c-diamide from precorrin-2 (aerobic route): step 4/10. Catalyzes the methylation of C-11 in precorrin-4 to form precorrin-5. This chain is Precorrin-4 C(11)-methyltransferase (cobM), found in Sinorhizobium sp.